A 387-amino-acid chain; its full sequence is Omega-6 fatty acid desaturase, endoplasmic reticulum isozyme 1 (387 aa).

The next 2 membrane-spanning stretches (helical) occupy residues 54 to 74 (LLTS…FYIA) and 87 to 107 (LIAW…VWVI). The short motif at 109–113 (HECGH) is the Histidine box-1 element. Residues 121-141 (WVDDVVGLTLHSTLLVPYFSW) form a helical membrane-spanning segment. Positions 145–149 (HRRHH) match the Histidine box-2 motif. Transmembrane regions (helical) follow at residues 183 to 203 (AVSL…FNVS), 227 to 247 (LLIY…YRVA), and 251 to 271 (GLVW…GFLV). The Histidine box-3 motif lies at 319-323 (HVAHH).

Belongs to the fatty acid desaturase type 1 family. In terms of tissue distribution, strongly expressed in developing seeds.

It is found in the endoplasmic reticulum membrane. It functions in the pathway lipid metabolism; polyunsaturated fatty acid biosynthesis. ER (microsomal) omega-6 fatty acid desaturase introduces the second double bond in the biosynthesis of 18:3 fatty acids, important constituents of plant membranes. It is thought to use cytochrome b5 as an electron donor and to act on fatty acids esterified to phosphatidylcholine and, possibly, other phospholipids. The protein is Omega-6 fatty acid desaturase, endoplasmic reticulum isozyme 1 (FAD2-1) of Glycine max (Soybean).